The chain runs to 473 residues: GTPase Der (473 aa).

EngA-type G domains are found at residues 3-167 and 204-379; these read LTIA…GKDK and IRIA…RIWN. GTP contacts are provided by residues 9–16, 56–60, 119–122, 210–217, 257–261, and 322–325; these read GRPNVGKS, DTAGL, NKSE, GRPNTGKS, and NKWD. The region spanning 380-464 is the KH-like domain; sequence RRISTGKLNR…PIRLSLRTSD (85 aa).

Belongs to the TRAFAC class TrmE-Era-EngA-EngB-Septin-like GTPase superfamily. EngA (Der) GTPase family. In terms of assembly, associates with the 50S ribosomal subunit.

Its function is as follows. GTPase that plays an essential role in the late steps of ribosome biogenesis. This chain is GTPase Der, found in Bartonella bacilliformis (strain ATCC 35685 / KC583 / Herrer 020/F12,63).